Consider the following 230-residue polypeptide: MTSPNGVFSHLTYFMAAGALSLGIGFFALASALWFLICKRRELFEESKFKEFGENMKQGSCKPKLKAHPQCVFISRNFHAGYLQSQTEKREKEEAEKKAVRSHSKVEFCLQDPISCESPEVTSVANGSSVSTLSLSTSISSSYCCQTVEEAEDWLTDDCLETRIPLKNPLLGEPLKKKVLAYLSSISLEEWPGNTVSNTFCSEQKTDSLKELLVLKNTEVGKHNLQFDIE.

The helical transmembrane segment at 17–37 (AGALSLGIGFFALASALWFLI) threads the bilayer. An N-linked (GlcNAc...) asparagine glycan is attached at N126.

Its subcellular location is the membrane. This is an uncharacterized protein from Mus musculus (Mouse).